The following is a 179-amino-acid chain: ATP synthase subunit delta (179 aa).

This sequence belongs to the ATPase delta chain family. As to quaternary structure, F-type ATPases have 2 components, F(1) - the catalytic core - and F(0) - the membrane proton channel. F(1) has five subunits: alpha(3), beta(3), gamma(1), delta(1), epsilon(1). F(0) has three main subunits: a(1), b(2) and c(10-14). The alpha and beta chains form an alternating ring which encloses part of the gamma chain. F(1) is attached to F(0) by a central stalk formed by the gamma and epsilon chains, while a peripheral stalk is formed by the delta and b chains.

Its subcellular location is the cell membrane. Functionally, f(1)F(0) ATP synthase produces ATP from ADP in the presence of a proton or sodium gradient. F-type ATPases consist of two structural domains, F(1) containing the extramembraneous catalytic core and F(0) containing the membrane proton channel, linked together by a central stalk and a peripheral stalk. During catalysis, ATP synthesis in the catalytic domain of F(1) is coupled via a rotary mechanism of the central stalk subunits to proton translocation. In terms of biological role, this protein is part of the stalk that links CF(0) to CF(1). It either transmits conformational changes from CF(0) to CF(1) or is implicated in proton conduction. The protein is ATP synthase subunit delta of Clostridium botulinum (strain ATCC 19397 / Type A).